The sequence spans 387 residues: Sulfoacetaldehyde reductase (387 aa).

The protein belongs to the iron-containing alcohol dehydrogenase family.

It carries out the reaction 2-hydroxyethane-1-sulfonate + NAD(+) = sulfoacetaldehyde + NADH + H(+). The protein operates within organosulfur degradation; alkanesulfonate degradation. In terms of biological role, involved in an anaerobic respiration pathway that converts the sulfonate taurine (2-aminoethanesulfonate) to ammonia, acetate and sulfide. Catalyzes the NADH-dependent reduction of sulfoacetaldehyde to 2-hydroxyethane-1-sulfonate (isethionate). Does not accept acetaldehyde as a substrate. This is Sulfoacetaldehyde reductase from Bilophila wadsworthia (strain 3_1_6).